The primary structure comprises 347 residues: S-adenosylmethionine:tRNA ribosyltransferase-isomerase (347 aa).

The protein belongs to the QueA family. Monomer.

It is found in the cytoplasm. The enzyme catalyses 7-aminomethyl-7-carbaguanosine(34) in tRNA + S-adenosyl-L-methionine = epoxyqueuosine(34) in tRNA + adenine + L-methionine + 2 H(+). It functions in the pathway tRNA modification; tRNA-queuosine biosynthesis. Functionally, transfers and isomerizes the ribose moiety from AdoMet to the 7-aminomethyl group of 7-deazaguanine (preQ1-tRNA) to give epoxyqueuosine (oQ-tRNA). The sequence is that of S-adenosylmethionine:tRNA ribosyltransferase-isomerase from Streptococcus thermophilus (strain ATCC BAA-491 / LMD-9).